A 409-amino-acid polypeptide reads, in one-letter code: Autotransproter heptosyltransferase BAHTCr (409 aa).

The ADP-D-glycero-beta-D-manno-heptose site is built by Thr107, Leu108, and Gly109. Asp110 serves as the catalytic Proton acceptor. ADP-D-glycero-beta-D-manno-heptose contacts are provided by Gln224, Thr226, Lys230, Arg257, Gly302, and Glu326. Positions 339, 342, 358, and 370 each coordinate Fe(3+).

The protein belongs to the glycosyltransferase 9 family. As to quaternary structure, homododecamer composed of 6 homodimers forming a ring. Fe(3+) serves as cofactor.

The protein localises to the cytoplasm. The catalysed reaction is ADP-D-glycero-beta-D-manno-heptose + L-seryl-[protein] = O-(D-glycero-alpha-D-manno-heptosyl)-L-seryl-[protein] + ADP + H(+). It catalyses the reaction ADP-L-glycero-beta-D-manno-heptose + L-seryl-[protein] = O-(L-glycero-alpha-D-manno-heptosyl)-L-seryl-[protein] + ADP + H(+). In terms of biological role, glycosylates autotransporter CARC. By glycosylating CARC, involved in the colonization of the mouse host gastrointestinal tract. In Citrobacter rodentium (strain ICC168) (Citrobacter freundii biotype 4280), this protein is Autotransproter heptosyltransferase BAHTCr.